A 193-amino-acid chain; its full sequence is dTTP/UTP pyrophosphatase (193 aa).

Residue Asp75 is the Proton acceptor of the active site.

It belongs to the Maf family. YhdE subfamily. It depends on a divalent metal cation as a cofactor.

The protein localises to the cytoplasm. The catalysed reaction is dTTP + H2O = dTMP + diphosphate + H(+). It catalyses the reaction UTP + H2O = UMP + diphosphate + H(+). In terms of biological role, nucleoside triphosphate pyrophosphatase that hydrolyzes dTTP and UTP. May have a dual role in cell division arrest and in preventing the incorporation of modified nucleotides into cellular nucleic acids. In Koribacter versatilis (strain Ellin345), this protein is dTTP/UTP pyrophosphatase.